Reading from the N-terminus, the 225-residue chain is Small ribosomal subunit protein uS7 (225 aa).

Belongs to the universal ribosomal protein uS7 family. As to quaternary structure, component of the small ribosomal subunit. Mature ribosomes consist of a small (40S) and a large (60S) subunit. The 40S subunit contains about 32 different proteins and 1 molecule of RNA (18S). The 60S subunit contains 45 different proteins and 3 molecules of RNA (25S, 5.8S and 5S).

The protein resides in the cytoplasm. Component of the ribosome, a large ribonucleoprotein complex responsible for the synthesis of proteins in the cell. The small ribosomal subunit (SSU) binds messenger RNAs (mRNAs) and translates the encoded message by selecting cognate aminoacyl-transfer RNA (tRNA) molecules. The large subunit (LSU) contains the ribosomal catalytic site termed the peptidyl transferase center (PTC), which catalyzes the formation of peptide bonds, thereby polymerizing the amino acids delivered by tRNAs into a polypeptide chain. The nascent polypeptides leave the ribosome through a tunnel in the LSU and interact with protein factors that function in enzymatic processing, targeting, and the membrane insertion of nascent chains at the exit of the ribosomal tunnel. This Candida albicans (strain SC5314 / ATCC MYA-2876) (Yeast) protein is Small ribosomal subunit protein uS7 (RPS5).